A 3122-amino-acid polypeptide reads, in one-letter code: tRNA nuclease CdiA-2 (3122 aa).

Residues 36-205 (RAGVVPAWLS…ATLTTGNPNF (170 aa)) form a two-partner system transport domain (TPS) region. The helical transmembrane segment at 54 to 74 (VALAVLVAAGVVPIWVNAQVV) threads the bilayer. Residues 256-1254 (VVAGSNQVDY…GGSVAIQASG (999 aa)) are FHA-1. Positions 492–512 (GMTLGGGSLSNQGGRANSQGP) are disordered. A compositionally biased stretch (polar residues) spans 500-512 (LSNQGGRANSQGP). The tract at residues 1345-1635 (TRRVMQTSGN…SATAVNVLSN (291 aa)) is receptor binding domain (RBD). Residues 1790–1845 (TAGNIDLKNTQVFTNSGTVKADTTLALQGKQIDNAFGALQSGGLTSLDTTGNVDLT) form a periplasmic FHA-1 repeat (pFR) region. Positions 1947 to 2085 (SDTDLNSATG…TERHVYNSRE (139 aa)) are FHA-2. Disordered stretches follow at residues 2002–2031 (TSTI…ALTG), 2151–2174 (TTSQ…MSGG), and 2325–2352 (IGVQ…GSSI). The pretoxin (PT) domain stretch occupies residues 2086–2825 (THSRSGVVSG…SAGAAMASNV (740 aa)). 2 stretches are compositionally biased toward low complexity: residues 2151-2170 (TTSQ…HSGL) and 2325-2341 (IGVQ…MQSS). Residues 2342–2352 (EDQTIQRGSSI) show a composition bias toward polar residues. Residues 2821–3122 (MASNVELYNA…NITIIKPKGN (302 aa)) are C-terminal effector domain (CT), has tRNA nuclease activity. The ELYN C-terminal motif motif lies at 2826-2829 (ELYN). The tract at residues 2948–3000 (GATDRTPPSNAILSNSNSDNNSTQGSQSGTVTKTPNPEATGSLSGKPTQIPPL) is disordered. The truncated CT domain, has tRNA nuclease activity, sufficient for interaction with CdiI-2 stretch occupies residues 2948 to 3122 (GATDRTPPSN…NITIIKPKGN (175 aa)). The segment covering 2953 to 2994 (TPPSNAILSNSNSDNNSTQGSQSGTVTKTPNPEATGSLSGKP) has biased composition (polar residues). The interval 2987 to 3122 (TGSLSGKPTQ…NITIIKPKGN (136 aa)) is has tRNase activity. Residues glutamate 3012, aspartate 3039, aspartate 3048, and lysine 3067 contribute to the active site.

The protein in the N-terminal section; belongs to the CdiA toxin family. Interacts with cognate immunity protein CdiI, which blocks its tRNA nuclease activity. The truncated CT fragment (residues 2948-3122) specifically interacts with cognate CdiI which inhibits the tRNA nuclease activity. The truncated CT is more stable in vitro than the original CT fragment characterized in E.coli.

It is found in the membrane. It localises to the secreted. The protein resides in the target cell. Its subcellular location is the target cell cytoplasm. Toxic component of a toxin-immunity protein module, which functions as a cellular contact-dependent growth inhibition (CDI) system. CDI modules allow bacteria to communicate with and inhibit the growth of closely related neighboring bacteria in a contact-dependent fashion. The C-terminal 301 residues (the CT fragment) cleaves near the C-terminus of E.coli tRNA1B(Ala), probably preventing tRNA charging, and inhibits growth in E.coli. A truncated CT fragment (residues 2948-3122) has tRNA endonuclease activity on several B.thailandensis tRNAs as well as tRNA2(Arg) where it cleaves after A-70 and U-71. Inactive CT domain binds tRNA, probably in a 1:1 complex. Toxic activity is neutralized by coexpression of the cognate immunity protein CdiI in E.coli, but not by non-cognate immunity proteins from other strains of B.pseudomallei. May use lipopolysaccharide as its target cell receptor. Probably gains access to the cytoplasm of target cells (B.thailandensis strain E264) by using integral inner membrane protein BTH_II0599. Protein BTH_I0359 is also implicated in an unknown fashion in CDI in B.thailandensis strain E264. Its function is as follows. Expression of this cdiAIB locus in B.thailandensis confers protection against other bacteria carrying the locus; growth inhibition requires cellular contact. In terms of biological role, the CdiA protein is thought to be exported from the cell through the central lumen of CdiB, the other half of its two-partner system (TPS). The TPS domain probably remains associated with CdiB while the FHA-1 domain forms an extended filament with the receptor-binding domain (RBD) at its extremity; in the secretion arrested state the C-terminus of the RBD domain form a hairpin-like structure as the FHA-2, PT and CT domains are periplasmic. Upon binding to a target cell outer membrane receptor (possibly a lipoprotein in this CDI) a signal is transmitted to activate secretion. The filament elongates slightly, the rest of CdiA is secreted and the FHA-2 domain becomes stably associated with the target cell's outer membrane where it facilitates entry of the toxic CT domain into the target cell periplasm. From there the toxic CT domain is cleaved and gains access to the target cell cytoplasm via an inner membrane protein (probably inner membrane protein BTH_II0599). This is tRNA nuclease CdiA-2 (cdiA2) from Burkholderia pseudomallei (strain 1026b).